The primary structure comprises 250 residues: Heme oxygenase 2 (250 aa).

His16 contacts heme b. The tract at residues 228–250 (QDRPGSTEARSTAGHPITLMVGE) is disordered.

It belongs to the heme oxygenase family. In terms of assembly, homodimer.

The catalysed reaction is heme b + 3 reduced [NADPH--hemoprotein reductase] + 3 O2 = biliverdin IXalpha + CO + Fe(2+) + 3 oxidized [NADPH--hemoprotein reductase] + 3 H2O + H(+). Its function is as follows. Catalyzes the opening of the heme ring with the release of iron. Key enzyme in the synthesis of the chromophoric part of the photosynthetic antennae. The protein is Heme oxygenase 2 (pbsA2) of Synechocystis sp. (strain ATCC 27184 / PCC 6803 / Kazusa).